The following is a 651-amino-acid chain: Beta-glucuronidase (651 aa).

The N-terminal stretch at 1–22 (MSRGPAGAWVALGPLLWTCGLA) is a signal peptide. N-linked (GlcNAc...) asparagine glycans are attached at residues Asn-172 and Asn-419. Glu-450 functions as the Proton donor in the catalytic mechanism. Asn-630 is a glycosylation site (N-linked (GlcNAc...) asparagine).

Belongs to the glycosyl hydrolase 2 family. As to quaternary structure, homotetramer.

The protein localises to the lysosome. It carries out the reaction a beta-D-glucuronoside + H2O = D-glucuronate + an alcohol. With respect to regulation, inhibited by L-aspartic acid. Plays an important role in the degradation of dermatan and keratan sulfates. This is Beta-glucuronidase (GUSB) from Canis lupus familiaris (Dog).